The following is a 674-amino-acid chain: Growth arrest-specific protein 6 (674 aa).

A signal peptide spans 1-27; that stretch reads MPPPPGPAAALGTALLLLLLASESSHT. Positions 50-91 constitute a Gla domain; the sequence is FEEAKQGHLERECVEEVCSKEEAREVFENDPETEYFYPRYQE. Residues Cys62 and Cys67 are joined by a disulfide bond. Ser68 carries the post-translational modification Phosphoserine. An EGF-like 1; calcium-binding domain is found at 113 to 151; the sequence is LPDQCTPNPCDKKGTHICQDLMGNFFCVCTDGWGGRLCD. 14 disulfide bridges follow: Cys117/Cys130, Cys122/Cys139, Cys141/Cys150, Cys157/Cys168, Cys164/Cys177, Cys179/Cys192, Cys198/Cys209, Cys204/Cys218, Cys220/Cys233, Cys239/Cys248, Cys244/Cys257, Cys259/Cys274, Cys280/Cys566, and Cys441/Cys467. Residues 153–193 enclose the EGF-like 2; calcium-binding domain; it reads DVNECVQKNGGCSQVCHNKPGSFQCACHSGFSLASDGQTCQ. An EGF-like 3; calcium-binding domain is found at 194–234; that stretch reads DIDECTDSDTCGDARCKNLPGSYSCLCDEGYTYSSKEKTCQ. Residues 235–275 enclose the EGF-like 4; calcium-binding domain; sequence DVDECQQDRCEQTCVNSPGSYTCHCDGRGGLKLSPDMDTCE. Laminin G-like domains follow at residues 295–467 and 474–666; these read GRMF…KMQC and GSFF…SHSC. 2 residues coordinate Ca(2+): Asp326 and Glu328. N-linked (GlcNAc...) asparagine glycosylation is present at Asn417. Arg437 contacts Ca(2+). Residue Asn488 is glycosylated (N-linked (GlcNAc...) asparagine). Thr609 is subject to Phosphothreonine. Ser614 bears the Phosphoserine mark. 2 positions are modified to phosphothreonine: Thr617 and Thr633. A Phosphotyrosine modification is found at Tyr636. Cys639 and Cys666 are disulfide-bonded. Asp652 lines the Ca(2+) pocket.

Heterodimer and heterotetramer with AXL. Post-translationally, gamma-carboxyglutamate residues are formed by vitamin K dependent carboxylation. These residues are essential for the binding of calcium.

It localises to the secreted. Ligand for tyrosine-protein kinase receptors AXL, TYRO3 and MER whose signaling is implicated in cell growth and survival, cell adhesion and cell migration. GAS6/AXL signaling plays a role in various processes such as endothelial cell survival during acidification by preventing apoptosis, optimal cytokine signaling during human natural killer cell development, hepatic regeneration, gonadotropin-releasing hormone neuron survival and migration, platelet activation, or regulation of thrombotic responses. In Mus musculus (Mouse), this protein is Growth arrest-specific protein 6 (Gas6).